The chain runs to 376 residues: Putative glutamate--cysteine ligase 2 (376 aa).

Belongs to the glutamate--cysteine ligase type 2 family. YbdK subfamily.

It catalyses the reaction L-cysteine + L-glutamate + ATP = gamma-L-glutamyl-L-cysteine + ADP + phosphate + H(+). In terms of biological role, ATP-dependent carboxylate-amine ligase which exhibits weak glutamate--cysteine ligase activity. The sequence is that of Putative glutamate--cysteine ligase 2 from Mycobacterium bovis (strain ATCC BAA-935 / AF2122/97).